We begin with the raw amino-acid sequence, 88 residues long: Small cysteine-rich outer membrane protein OmcA (88 aa).

An N-terminal signal peptide occupies residues 1-18; it reads MKKTALLAALCSVVSLSS. Cys-19 carries N-palmitoyl cysteine lipidation. Cys-19 is lipidated: S-diacylglycerol cysteine. The disordered stretch occupies residues 67 to 88; that stretch reads THQDAEHGPQAREIPVDGKCRQ.

In terms of assembly, part of a disulfide cross-linked outer membrane complex (COMC) composed of the major outer membrane porin (MOMP), the small cysteine-rich protein (OmcA) and the large cysteine-rich periplasmic protein (OmcB).

The protein localises to the cell outer membrane. Functionally, in elementary bodies (EBs, the infectious stage, which is able to survive outside the host cell) provides the structural integrity of the outer envelope through disulfide cross-links with the large cysteine-rich periplasmic protein and the major outer membrane porin. It has been described in publications as the Sarkosyl-insoluble COMC (Chlamydia outer membrane complex), and serves as the functional equivalent of peptidoglycan. The protein is Small cysteine-rich outer membrane protein OmcA (omcA) of Chlamydia trachomatis serovar L2 (strain ATCC VR-902B / DSM 19102 / 434/Bu).